The following is an 84-amino-acid chain: MSKGHSLQDPYLNTLRKERVPVSIYLVNGIKLQGQIESFDQFVILLKNTVSQMVYKHAISTVVPGRPVRLPTAGDAEQSESGND.

Residues 9–68 (DPYLNTLRKERVPVSIYLVNGIKLQGQIESFDQFVILLKNTVSQMVYKHAISTVVPGRPV) enclose the Sm domain.

It belongs to the Hfq family. As to quaternary structure, homohexamer.

Its function is as follows. RNA chaperone that binds small regulatory RNA (sRNAs) and mRNAs to facilitate mRNA translational regulation in response to envelope stress, environmental stress and changes in metabolite concentrations. Also binds with high specificity to tRNAs. In Stutzerimonas stutzeri (strain A1501) (Pseudomonas stutzeri), this protein is RNA-binding protein Hfq.